The following is a 160-amino-acid chain: Large ribosomal subunit protein uL22c (160 aa).

This sequence belongs to the universal ribosomal protein uL22 family. Part of the 50S ribosomal subunit.

The protein localises to the plastid. It localises to the chloroplast. This protein binds specifically to 23S rRNA. In terms of biological role, the globular domain of the protein is located near the polypeptide exit tunnel on the outside of the subunit, while an extended beta-hairpin is found that lines the wall of the exit tunnel in the center of the 70S ribosome. The sequence is that of Large ribosomal subunit protein uL22c (rpl22) from Aethionema cordifolium (Lebanon stonecress).